Consider the following 121-residue polypeptide: uncharacterized protein (121 aa).

Position 77 to 84 (77 to 84 (AALSFGKT)) interacts with ATP.

This is an uncharacterized protein from Saccharomyces cerevisiae (strain ATCC 204508 / S288c) (Baker's yeast).